The chain runs to 150 residues: Macrodomain Ter protein (150 aa).

The protein belongs to the MatP family. Homodimer.

It is found in the cytoplasm. Its function is as follows. Required for spatial organization of the terminus region of the chromosome (Ter macrodomain) during the cell cycle. Prevents early segregation of duplicated Ter macrodomains during cell division. Binds specifically to matS, which is a 13 bp signature motif repeated within the Ter macrodomain. The chain is Macrodomain Ter protein from Escherichia coli O81 (strain ED1a).